Consider the following 231-residue polypeptide: AA9 family lytic polysaccharide monooxygenase C (231 aa).

The first 18 residues, 1 to 18, serve as a signal peptide directing secretion; the sequence is MKSGLLFTTASLALTASA. His19 serves as a coordination point for Cu(2+). Cys60 and Cys179 are joined by a disulfide. N-linked (GlcNAc...) asparagine glycans are attached at residues Asn69 and Asn143. O2-binding residues include His165 and Gln174. Cu(2+) is bound at residue Tyr176.

It belongs to the polysaccharide monooxygenase AA9 family. Cu(2+) is required as a cofactor.

The protein localises to the secreted. It catalyses the reaction [(1-&gt;4)-beta-D-glucosyl]n+m + reduced acceptor + O2 = 4-dehydro-beta-D-glucosyl-[(1-&gt;4)-beta-D-glucosyl]n-1 + [(1-&gt;4)-beta-D-glucosyl]m + acceptor + H2O.. Functionally, lytic polysaccharide monooxygenase (LPMO) that depolymerizes crystalline and amorphous polysaccharides via the oxidation of scissile alpha- or beta-(1-4)-glycosidic bonds, yielding C1 oxidation products. Catalysis by LPMOs requires the reduction of the active-site copper from Cu(II) to Cu(I) by a reducing agent and H(2)O(2) or O(2) as a cosubstrate. The sequence is that of AA9 family lytic polysaccharide monooxygenase C from Emericella nidulans (strain FGSC A4 / ATCC 38163 / CBS 112.46 / NRRL 194 / M139) (Aspergillus nidulans).